The following is an 834-amino-acid chain: WW domain-containing adapter protein with coiled-coil homolog (834 aa).

3 disordered regions span residues 1–247 (MVMH…WSEH), 268–411 (KPKE…SVAT), and 430–504 (VTGA…GAKG). Low complexity predominate over residues 22-31 (HTSYQSSKYS). Over residues 33 to 50 (SKRDYERDRSSNYRDRDL) the composition is skewed to basic and acidic residues. Residues 53–77 (GAGGGGGGGSAGGGGGGSGNGGGPL) show a composition bias toward gly residues. Positions 96–108 (RSHDLRDRSDHRG) are enriched in basic and acidic residues. Positions 109–119 (GGGGNGRGGSG) are enriched in gly residues. 3 stretches are compositionally biased toward basic and acidic residues: residues 127-168 (KMRD…DRRG), 181-246 (SSRE…DWSE), and 268-303 (KPKEWVDRERNLPRDQHREKDYRDKDRDRDRDDRFS). The WW domain maps to 244–271 (WSEHVSSSGKMYYYNCKTEISQWEKPKE). 2 stretches are compositionally biased toward polar residues: residues 304 to 314 (RSTYKHSNSSR) and 350 to 363 (GDSTPTSEASYSLS). Gly residues predominate over residues 369-384 (HGGGPGGGGPGGGGGS). Composition is skewed to low complexity over residues 402–411 (TANSSASVAT) and 431–466 (TGATMLPTMSGMLNSNSSNSAGGSSSNASSSSLRNS). Polar residues predominate over residues 472 to 496 (GSTSGTTVPTLGSQDPHQHHLNSNA).

Expressed in adult head and thorax and in larval central nervous system and fat body.

It is found in the nucleus. The protein localises to the lysosome. Functionally, acts as a linker between gene transcription and histone H2B monoubiquitination at 'Lys-118'. Regulates the cell-cycle checkpoint activation in response to DNA damage. Positive regulator of amino acid starvation-induced autophagy. Also acts as a negative regulator of basal autophagy. Positively regulates mTor activity. Promotes, in an energy-dependent manner, the assembly of the TTT complex and the RUVBL complex composed of pont and rept into the TTT-RUVBL complex. This leads to dimerization of the mTORC1 complex and its subsequent activation. May negatively regulate the ubiquitin proteasome pathway. Required for habituation, a form of non-associative learning. The protein is WW domain-containing adapter protein with coiled-coil homolog of Drosophila melanogaster (Fruit fly).